We begin with the raw amino-acid sequence, 513 residues long: ATP synthase subunit alpha 1 (513 aa).

169–176 (GDRQTGKT) contacts ATP.

Belongs to the ATPase alpha/beta chains family. In terms of assembly, F-type ATPases have 2 components, CF(1) - the catalytic core - and CF(0) - the membrane proton channel. CF(1) has five subunits: alpha(3), beta(3), gamma(1), delta(1), epsilon(1). CF(0) has three main subunits: a(1), b(2) and c(9-12). The alpha and beta chains form an alternating ring which encloses part of the gamma chain. CF(1) is attached to CF(0) by a central stalk formed by the gamma and epsilon chains, while a peripheral stalk is formed by the delta and b chains.

It localises to the cell inner membrane. It carries out the reaction ATP + H2O + 4 H(+)(in) = ADP + phosphate + 5 H(+)(out). In terms of biological role, produces ATP from ADP in the presence of a proton gradient across the membrane. The alpha chain is a regulatory subunit. The protein is ATP synthase subunit alpha 1 of Methylococcus capsulatus (strain ATCC 33009 / NCIMB 11132 / Bath).